A 177-amino-acid polypeptide reads, in one-letter code: Large ribosomal subunit protein uL6 (177 aa).

The protein belongs to the universal ribosomal protein uL6 family. As to quaternary structure, part of the 50S ribosomal subunit.

Its function is as follows. This protein binds to the 23S rRNA, and is important in its secondary structure. It is located near the subunit interface in the base of the L7/L12 stalk, and near the tRNA binding site of the peptidyltransferase center. The chain is Large ribosomal subunit protein uL6 from Rickettsia peacockii (strain Rustic).